The following is a 386-amino-acid chain: MSAAPPRRVVICGGGVVGACTAYFLATHAASPTVPTLVERCAPACAASGKAGGFLALDWCDSTPALSRLARASFALHRRLADALGGADAYGFRPVHTLSVLLPPHPAASSSPPHPLLPPWVDPSASAAPPRELGTPDTTAQVHPGLFTKAVLAASGAEVVIGEVERVAVAWDGRVAGVVVKGRDGVLDADAVVLALGPWSGRLEVVSEVFDVSGLKAHSIVLRPREPEKVTPHCLFLSYQPEPGAKMLDPEVYPRPTGEVYICGMSKDENPPDDPATITGEPDSIAMLHKIAGKVSSQLKKEEGAEVVAEQACYLPCTADGLPVIGEIPGVKGCYVATGHSCWGILNGPATGAALAELILDGKAKIVDLEPFSPARFLKRRSRRGV.

Positions 14, 15, 16, 17, 39, 40, 51, 52, and 53 each coordinate FAD. The interval 109–138 (SSSPPHPLLPPWVDPSASAAPPRELGTPDT) is disordered. Positions 112–121 (PPHPLLPPWV) are enriched in pro residues. Residues Arg174, Val175, and Ala176 each contribute to the FAD site. Positions 253, 261, and 332 each coordinate D-serine. The D-proline site is built by Tyr261 and Lys332. FAD is bound by residues Lys332, Gly344, Ile345, Gly362, and Ala364. Lys332 provides a ligand contact to D-dopa. Gly362 serves as a coordination point for D-serine. D-proline is bound at residue Gly362. Gly362 serves as a coordination point for D-dopa.

Belongs to the DAMOX/DASOX family.

It catalyses the reaction a D-alpha-amino acid + O2 + H2O = a 2-oxocarboxylate + H2O2 + NH4(+). The catalysed reaction is D-alanine + O2 + H2O = pyruvate + H2O2 + NH4(+). It carries out the reaction D-aspartate + O2 + H2O = oxaloacetate + H2O2 + NH4(+). Its function is as follows. Catalyzes the oxidative deamination of D-amino acids with broad substrate specificity. Enables the organism to utilize D-amino acids as a source of nutrients. This Zea mays (Maize) protein is D-amino-acid oxidase.